The chain runs to 280 residues: Probable endonuclease 4 (280 aa).

9 residues coordinate Zn(2+): H69, H109, E145, D179, H182, H216, D229, H231, and E261.

The protein belongs to the AP endonuclease 2 family. The cofactor is Zn(2+).

The enzyme catalyses Endonucleolytic cleavage to 5'-phosphooligonucleotide end-products.. Endonuclease IV plays a role in DNA repair. It cleaves phosphodiester bonds at apurinic or apyrimidinic (AP) sites, generating a 3'-hydroxyl group and a 5'-terminal sugar phosphate. The polypeptide is Probable endonuclease 4 (Photorhabdus laumondii subsp. laumondii (strain DSM 15139 / CIP 105565 / TT01) (Photorhabdus luminescens subsp. laumondii)).